Here is a 97-residue protein sequence, read N- to C-terminus: Co-chaperonin GroES (97 aa).

It belongs to the GroES chaperonin family. In terms of assembly, heptamer of 7 subunits arranged in a ring. Interacts with the chaperonin GroEL.

It is found in the cytoplasm. Functionally, together with the chaperonin GroEL, plays an essential role in assisting protein folding. The GroEL-GroES system forms a nano-cage that allows encapsulation of the non-native substrate proteins and provides a physical environment optimized to promote and accelerate protein folding. GroES binds to the apical surface of the GroEL ring, thereby capping the opening of the GroEL channel. This is Co-chaperonin GroES from Pectobacterium atrosepticum (strain SCRI 1043 / ATCC BAA-672) (Erwinia carotovora subsp. atroseptica).